A 620-amino-acid polypeptide reads, in one-letter code: Chaperone protein HscA homolog (620 aa).

The protein belongs to the heat shock protein 70 family.

Its function is as follows. Chaperone involved in the maturation of iron-sulfur cluster-containing proteins. Has a low intrinsic ATPase activity which is markedly stimulated by HscB. The sequence is that of Chaperone protein HscA homolog from Shewanella baltica (strain OS155 / ATCC BAA-1091).